The sequence spans 500 residues: MGPGGRQSAEPASTEVFGDSDFVVVANRLPVDQERLPDGTIAWKRSPGGLVTALEPLLRRRRGAWVGWAGVVENDVDVQDEPIVQDELQLQPVRLSADDVAQYYEGFSNATLWPLYHDVIVRPIYHREWWDRYVDVNRRFAEATARAAARGGTVWVQDYQLQLVPKMLRAMRPDLTIGFFLHIPFPPVELFMQLPWRTEIIQGLLGADLVGFHLPGGAQNFLILSRRLVGADTSRGTVGVRSRFGEVILGSRTIRVGAFPISIDSGALDQTARDRNIRRRSREIRAELGNPRKILLGVDRLDYTKGIDVRLKAFSELLAEGRVKRDDTVLVQLATPSRERVESYQTLRNDIERQVGHINGEYAEVGHPVVHYLHRPVPRNELIAFFVASDVMLVTPLRDGMNLVAKEYVACRSDLGGALVLSEFTGAAAELRHAYLVNPHDLEGVNDGIEEALNQTEEAGRRRMRSMRRQVLAHDVDRWARSFLDALADSRPNDSADAAD.

Arg-28 contacts D-glucose 6-phosphate. Residue 48-49 coordinates UDP-alpha-D-glucose; the sequence is GG. D-glucose 6-phosphate contacts are provided by Tyr-104 and Asp-158. The UDP-alpha-D-glucose site is built by Arg-300 and Lys-305. A D-glucose 6-phosphate-binding site is contributed by Arg-338. 403-407 is a UDP-alpha-D-glucose binding site; sequence LVAKE.

The protein belongs to the glycosyltransferase 20 family. In terms of assembly, homotetramer.

It carries out the reaction ADP-alpha-D-glucose + D-glucose 6-phosphate = alpha,alpha-trehalose 6-phosphate + ADP + H(+). The catalysed reaction is CDP-alpha-D-glucose + D-glucose 6-phosphate = alpha,alpha-trehalose 6-phosphate + CDP + H(+). The enzyme catalyses GDP-alpha-D-glucose + D-glucose 6-phosphate = alpha,alpha-trehalose 6-phosphate + GDP + H(+). It catalyses the reaction TDP-alpha-D-glucose + D-glucose 6-phosphate = 5-methyl-UDP + alpha,alpha-trehalose 6-phosphate + H(+). It carries out the reaction D-glucose 6-phosphate + UDP-alpha-D-glucose = alpha,alpha-trehalose 6-phosphate + UDP + H(+). It participates in glycan biosynthesis; trehalose biosynthesis. Its function is as follows. Probably involved in the osmoprotection via the biosynthesis of trehalose and in the production of glycogen and alpha-glucan via the TreS-Pep2 branch involved in the biosynthesis of maltose-1-phosphate (M1P). Catalyzes the transfer of glucose from UDP-glucose (UDP-Glc) to D-glucose 6-phosphate (Glc-6-P) to form trehalose-6-phosphate. Probably also able to use ADP-Glc, CDP-Glc, GDP-Glc and TDP-Glc as glucosyl donors. This is Trehalose-6-phosphate synthase from Mycobacterium ulcerans (strain Agy99).